A 344-amino-acid chain; its full sequence is Ras association domain-containing protein 1 (344 aa).

Ser2 carries the post-translational modification N-acetylserine. Ser2 is subject to Phosphoserine. A mediates interaction with E4F1 region spans residues 2 to 119 (SGEPELIELR…DLGWEPAVER (118 aa)). Arg36 carries the omega-N-methylarginine modification. The Phorbol-ester/DAG-type zinc-finger motif lies at 51–105 (GHRFQPAGPATHTWCDLCGDFIWGVVRKGLQCARLSADCKFTCHYRCRALVCLDC). Low complexity predominate over residues 179 to 189 (SVPSSKKPPSL). A disordered region spans residues 179 to 203 (SVPSSKKPPSLQDARRGPGRGTSVR). Positions 198–292 (RGTSVRRRTS…LSFVLKENDS (95 aa)) constitute a Ras-associating domain. Residues 294–341 (EVNWDAFSMPELHNFLRILQREEEEHLRQILQKYSYCRQKIQEALHAC) enclose the SARAH domain. Positions 315–318 (EEEE) are MOAP1-binding.

In terms of assembly, interacts with MAP1S. Interacts with XPA. Binds to the N-terminal of CDC20 during prometaphase. Binds to STK3/MST2 and STK4/MST1. Recruited to the TNFRSF1A and TNFRSF10A complexes in response to their respective cognate ligand, after internalization. Can self-associate. Part of a complex with MDM2, DAXX, RASSF1 and USP7. Interacts with ECM2. Interacts with MOAP1. Interacts with E4F1. Interacts with RSSF5 and probably associates with HRAS via a RSSF1 isoform A-RSSF5 heterodimer. Interacts (via C-terminus) with DAXX (via N-terminus); the interaction is independent of MDM2 and TP53. Interacts (via N-terminus) with MDM2 (via C-terminus); the interaction is independent of TP53. Interacts with RAB39A. Interacts with RAB39B; the interaction is weak. As to quaternary structure, interacts (via N-terminus) with DAXX. Interacts with RAB39B; the interaction is strong. Does not interact with RAB39A. In terms of assembly, interacts (via N-terminus) with DAXX. As to expression, isoform A and isoform C are ubiquitously expressed in all tissues tested, however isoform A is absent in many corresponding cancer cell lines. Isoform B is mainly expressed in hematopoietic cells.

The protein resides in the cytoplasm. The protein localises to the cytoskeleton. Its subcellular location is the microtubule organizing center. It is found in the centrosome. It localises to the spindle. The protein resides in the spindle pole. The protein localises to the nucleus. Functionally, potential tumor suppressor. Required for death receptor-dependent apoptosis. Mediates activation of STK3/MST2 and STK4/MST1 during Fas-induced apoptosis by preventing their dephosphorylation. When associated with MOAP1, promotes BAX conformational change and translocation to mitochondrial membranes in response to TNF and TNFSF10 stimulation. Isoform A interacts with CDC20, an activator of the anaphase-promoting complex, APC, resulting in the inhibition of APC activity and mitotic progression. Inhibits proliferation by negatively regulating cell cycle progression at the level of G1/S-phase transition by regulating accumulation of cyclin D1 protein. Isoform C has been shown not to perform these roles, no function has been identified for this isoform. Isoform A disrupts interactions among MDM2, DAXX and USP7, thus contributing to the efficient activation of TP53 by promoting MDM2 self-ubiquitination in cell-cycle checkpoint control in response to DNA damage. In Homo sapiens (Human), this protein is Ras association domain-containing protein 1.